We begin with the raw amino-acid sequence, 266 residues long: uncharacterized protein (266 aa).

Belongs to the chlamydial CPn_0087/CT_309/TC_0583 family.

This is an uncharacterized protein from Chlamydia pneumoniae (Chlamydophila pneumoniae).